The following is a 385-amino-acid chain: Isocitrate dehydrogenase [NAD] subunit beta, mitochondrial (385 aa).

A mitochondrion-targeting transit peptide spans 1–33 (MAALSRVRWLTRALVAAPNPGAWRSLCTSTVAQ). N6-acetyllysine is present on lysine 199.

It belongs to the isocitrate and isopropylmalate dehydrogenases family. In terms of assembly, heterooligomer of subunits alpha (IDH3A), beta (IDH3B), and gamma (IDH3G) in the apparent ratio of 2:1:1. The heterodimer containing one IDH3A and one IDH3B subunit and the heterodimer containing one IDH3A and one IDH3G subunit assemble into a heterotetramer (which contains two subunits of IDH3A, one of IDH3B and one of IDH3G) and further into the heterooctamer. In terms of tissue distribution, isoform A is predominant in heart muscle; also found in brain, kidney and liver. Isoform B is present in kidney and liver.

It localises to the mitochondrion. The heterotetramer and the heterodimer composed of IDH3A and IDH3G subunits can be allosterically activated by citrate (CIT) or/and ADP, and the two activators can act independently or synergistically. The heterodimer composed of IDH3A and IDH3B subunits cannot be allosterically regulated and the allosteric regulation of the heterotetramer is through the IDH3G subunit and not the IDH3B subunit. The IDH3G subunit contains the allosteric site which consists of a CIT-binding site and an ADP-binding site, and the binding of CIT and ADP causes conformational changes at the allosteric site which are transmitted to the active site in the catalytic subunit (IDH3A) through a cascade of conformational changes at the heterodimer interface, leading to stabilization of the isocitrate-binding at the active site and thus activation of the enzyme. ATP can activate the heterotetramer and the heterodimer composed of IDH3A and IDH3G subunits at low concentrations but inhibits their activities at high concentrations, whereas ATP exhibits only inhibitory effect on the heterodimer composed of IDH3A and IDH3B subunits. Plays a structural role to facilitate the assembly and ensure the full activity of the enzyme catalyzing the decarboxylation of isocitrate (ICT) into alpha-ketoglutarate. The heterodimer composed of the alpha (IDH3A) and beta (IDH3B) subunits and the heterodimer composed of the alpha (IDH3A) and gamma (IDH3G) subunits, have considerable basal activity but the full activity of the heterotetramer (containing two subunits of IDH3A, one of IDH3B and one of IDH3G) requires the assembly and cooperative function of both heterodimers. This chain is Isocitrate dehydrogenase [NAD] subunit beta, mitochondrial (IDH3B), found in Bos taurus (Bovine).